The primary structure comprises 247 residues: Chymase (247 aa).

The first 17 residues, 1–17 (MCLLSLPLLLFLQYTRA), serve as a signal peptide directing secretion. Residues 18–21 (KAGE) constitute a propeptide, activation peptide. The Peptidase S1 domain maps to 22-245 (VIGGTECKPH…YRPWINKILK (224 aa)). A disulfide bridge links Cys51 with Cys67. Residue His66 is the Charge relay system of the active site. An N-linked (GlcNAc...) asparagine glycan is attached at Asn103. Catalysis depends on Asp110, which acts as the Charge relay system. An N-linked (GlcNAc...) asparagine glycan is attached at Asn121. 2 cysteine pairs are disulfide-bonded: Cys144-Cys209 and Cys175-Cys188. Ser203 serves as the catalytic Charge relay system.

This sequence belongs to the peptidase S1 family. Granzyme subfamily.

Its subcellular location is the secreted. The protein localises to the cytoplasmic granule. The catalysed reaction is Preferential cleavage: Phe-|-Xaa &gt; Tyr-|-Xaa &gt; Trp-|-Xaa &gt; Leu-|-Xaa.. Major secreted protease of mast cells with suspected roles in vasoactive peptide generation, extracellular matrix degradation, and regulation of gland secretion. This is Chymase from Cavia porcellus (Guinea pig).